A 359-amino-acid chain; its full sequence is Short chain dehydrogenase resG (359 aa).

Residues Lys-87, Asp-110, Asn-137, Tyr-237, and Lys-241 each coordinate NADP(+). Residue Tyr-237 is the Proton donor of the active site. Catalysis depends on Lys-241, which acts as the Lowers pKa of active site Tyr.

The protein belongs to the short-chain dehydrogenases/reductases (SDR) family.

It functions in the pathway antifungal biosynthesis. Its function is as follows. Short chain dehydrogenase; part of the gene cluster that mediates the biosynthesis of the tetrahydropyranyl antifungal agent restricticin that acts as an inhibitor of CYP51 and blocks the ergosterol biosynthesis. The highly reducing polyketide synthase resH, the short chain dehydrogenase resG, the cyclase resF, the FAD-dependent monooxygenase resA and the enoylreductase resD are required to generate the first stable intermediate desmethylrestrictinol. ResH with resD biosynthesize the first polyketide chain intermediate that is reduced by resG, followed by epoxidation by resA before 6-endo cyclization via epoxide opening by resF leads to desmethylrestrictinol. The methyltransferase resE then catalyzes the C4 O-methylation of desmethylrestrictinol to produce restrictinol, and the nonribosomal peptide synthetase resC catalyzes the C3 esterification of restrictinol with glycine that leads to restricticin. In Aspergillus sclerotiorum, this protein is Short chain dehydrogenase resG.